A 324-amino-acid polypeptide reads, in one-letter code: IDS-like terpene synthase 1 (324 aa).

Mg(2+)-binding residues include Asp-77 and Asp-81.

This sequence belongs to the FPP/GGPP synthase family. Mg(2+) is required as a cofactor.

It carries out the reaction (2E)-geranyl diphosphate = (E)-beta-ocimene + diphosphate. The enzyme catalyses (2E)-geranyl diphosphate + H2O = linalool + diphosphate. It catalyses the reaction (2E,6E)-farnesyl diphosphate = (3E,6E)-alpha-farnesene + diphosphate. The catalysed reaction is (2E,6E,10E)-geranylgeranyl diphosphate = (E,E,E)-alpha-springene + diphosphate. Terpene synthase that shows monoterpene synthase activity and produces (E)-beta-ocimene as a major product and linalool as a minor product, using geranyl diphosphate (GPP) as substrate. Also shows sesquiterpene synthase activity as it is able to convert farnesyl diphosphate (FPP) into (E,E)-alpha-farnesene. Finally, TPS1 can convert geranylgeranyl diphosphate into (E,E,E)-alpha-springene. This chain is IDS-like terpene synthase 1, found in Melampsora larici-populina (strain 98AG31 / pathotype 3-4-7) (Poplar leaf rust fungus).